The primary structure comprises 231 residues: Ninja-family protein AFP3 (231 aa).

The segment covering 83 to 96 has biased composition (basic residues); sequence AKRKRSEKQRKHKA. Positions 83-152 are disordered; it reads AKRKRSEKQR…SAQSQPENLG (70 aa). Polar residues predominate over residues 130–152; the sequence is QATTNKSVETSPSSAQSQPENLG.

It belongs to the Ninja family. Forms a heterodimer with AFP2. Interacts with ABI5/DPBF1, DPBF2, AREB3/DPBF3, EEL/DPBF4, ABF1, ABF3/DPBF5 and ABF4/AREB2.

It localises to the nucleus. Functionally, acts as a negative regulator of abscisic acid (ABA) response and stress responses. The polypeptide is Ninja-family protein AFP3 (AFP3) (Arabidopsis thaliana (Mouse-ear cress)).